A 1212-amino-acid chain; its full sequence is Myosin-1 (1212 aa).

The disordered stretch occupies residues Met-1–Thr-35. One can recognise a Myosin motor domain in the interval Val-41 to Asp-715. Gly-134–Thr-141 is a binding site for ATP. The segment at Ser-405–Ala-487 is actin-binding. IQ domains follow at residues His-719–Ser-739 and Ala-740–Arg-765. One can recognise a TH1 domain in the interval Arg-773–Pro-962. Disordered stretches follow at residues Asp-947–Ala-1064 and Pro-1115–Trp-1212. Over residues Val-954 to Ser-966 the composition is skewed to polar residues. 2 stretches are compositionally biased toward low complexity: residues Arg-987–Gly-998 and Pro-1008–Arg-1052. Residues Ala-1053–Pro-1062 show a composition bias toward pro residues. One can recognise an SH3 domain in the interval Lys-1065–Gln-1124. Over residues Ala-1125–Pro-1140 the composition is skewed to pro residues. Over residues Met-1171 to Asn-1190 the composition is skewed to polar residues.

It belongs to the TRAFAC class myosin-kinesin ATPase superfamily. Myosin family.

It is found in the cytoplasm. Its subcellular location is the cytoskeleton. The protein resides in the actin patch. Functionally, type-I myosin implicated in the organization of the actin cytoskeleton. Required for proper actin cytoskeleton polarization. At the cell cortex, assembles in patch-like structures together with proteins from the actin-polymerizing machinery and promotes actin assembly. Functions as actin nucleation-promoting factor (NPF) for the Arp2/3 complex. The protein is Myosin-1 (MYO1) of Pyricularia oryzae (strain 70-15 / ATCC MYA-4617 / FGSC 8958) (Rice blast fungus).